The sequence spans 153 residues: Deoxyuridine 5'-triphosphate nucleotidohydrolase (153 aa).

S75, G88, D91, Y94, K99, R143, F148, and G149 together coordinate dUMP.

The protein belongs to the dUTPase family. As to quaternary structure, homotrimer. Mg(2+) is required as a cofactor.

The enzyme catalyses dUTP + H2O = dUMP + diphosphate + H(+). Its pathway is pyrimidine metabolism; dUMP biosynthesis; dUMP from dCTP (dUTP route): step 2/2. Its function is as follows. Involved in nucleotide metabolism via production of dUMP, the immediate precursor of thymidine nucleotides, and decreases the intracellular concentration of dUTP so that uracil cannot be incorporated into DNA. This is Deoxyuridine 5'-triphosphate nucleotidohydrolase (DUT1) from Eremothecium gossypii (strain ATCC 10895 / CBS 109.51 / FGSC 9923 / NRRL Y-1056) (Yeast).